The sequence spans 202 residues: Dephospho-CoA kinase (202 aa).

Residues 4-201 (VIGLTGGIAS…QKYLAMSKQN (198 aa)) form the DPCK domain. Residue 12–17 (ASGKTT) participates in ATP binding.

This sequence belongs to the CoaE family.

The protein localises to the cytoplasm. The enzyme catalyses 3'-dephospho-CoA + ATP = ADP + CoA + H(+). It functions in the pathway cofactor biosynthesis; coenzyme A biosynthesis; CoA from (R)-pantothenate: step 5/5. Its function is as follows. Catalyzes the phosphorylation of the 3'-hydroxyl group of dephosphocoenzyme A to form coenzyme A. In Vibrio vulnificus (strain CMCP6), this protein is Dephospho-CoA kinase.